Consider the following 204-residue polypeptide: MKVLIVFYSMYGHIYRMAEAVAEGVRSVDGAEAVLRRVPETLSAEILASMGATEAQKQFAHIPVCTVDELGAADAVIFGTPTRFGNMAGQMRQFLDATGRLWVSGALVGKAGSVFTSSNTQHGGQESTILSFHINLLHQGMVIVGLPYSFQGQSTMDEITGGSPYGASTIAGPTGARTPSDNELAGARYQGRHVAEIARKLTRN.

Residues Val3–Val194 form the Flavodoxin-like domain. FMN is bound by residues Ser9–Ile14 and Thr82–Phe84. Tyr11 is an NAD(+) binding site. Trp102 is a binding site for substrate. His138 lines the FMN pocket.

This sequence belongs to the WrbA family. FMN is required as a cofactor.

It catalyses the reaction a quinone + NADH + H(+) = a quinol + NAD(+). It carries out the reaction a quinone + NADPH + H(+) = a quinol + NADP(+). The polypeptide is NAD(P)H dehydrogenase (quinone) (Syntrophobacter fumaroxidans (strain DSM 10017 / MPOB)).